Here is a 313-residue protein sequence, read N- to C-terminus: Biotin synthase (313 aa).

Residues 28-258 enclose the Radical SAM core domain; sequence NFGNDIELCS…LFPQARLRLS (231 aa). Residues Cys46, Cys50, and Cys53 each contribute to the [4Fe-4S] cluster site. [2Fe-2S] cluster-binding residues include Cys90, Cys121, Cys181, and Arg256.

Belongs to the radical SAM superfamily. Biotin synthase family. Homodimer. [4Fe-4S] cluster is required as a cofactor. Requires [2Fe-2S] cluster as cofactor.

It carries out the reaction (4R,5S)-dethiobiotin + (sulfur carrier)-SH + 2 reduced [2Fe-2S]-[ferredoxin] + 2 S-adenosyl-L-methionine = (sulfur carrier)-H + biotin + 2 5'-deoxyadenosine + 2 L-methionine + 2 oxidized [2Fe-2S]-[ferredoxin]. It participates in cofactor biosynthesis; biotin biosynthesis; biotin from 7,8-diaminononanoate: step 2/2. Catalyzes the conversion of dethiobiotin (DTB) to biotin by the insertion of a sulfur atom into dethiobiotin via a radical-based mechanism. The polypeptide is Biotin synthase (Francisella tularensis subsp. tularensis (strain WY96-3418)).